Here is a 970-residue protein sequence, read N- to C-terminus: Sodium/calcium exchanger 1 (970 aa).

Positions 1–32 are cleaved as a signal peptide; that stretch reads MLRLRLSPTFSVGFHLLAFVPLLFSHVDLISA. At 33 to 71 the chain is on the extracellular side; that stretch reads DTEMEGEGNETGECTGSYYCKKGVILPIWEPQDPSFGDK. Asn41 carries an N-linked (GlcNAc...) asparagine glycan. The chain crosses the membrane as a helical span at residues 72–92; sequence IARATVYFVAMVYMFLGVSII. The Cytoplasmic portion of the chain corresponds to 93-133; it reads ADRFMSSIEVITSQEKEITIKKPNGETTKTTVRIWNETVSN. The helical transmembrane segment at 134–154 threads the bilayer; it reads LTLMALGSSAPEILLSVIEVC. An Alpha-1 repeat occupies 138–178; the sequence is ALGSSAPEILLSVIEVCGHNFTAGDLGPSTIVGSAAFNMFI. Residues 155–167 are Extracellular-facing; sequence GHNFTAGDLGPST. Residue Asn157 is glycosylated (N-linked (GlcNAc...) asparagine). The chain crosses the membrane as a helical span at residues 168-188; sequence IVGSAAFNMFIIIALCVYVVP. Residues 189–201 are Cytoplasmic-facing; the sequence is DGETRKIKHLRVF. A helical transmembrane segment spans residues 202–222; sequence FVTAAWSIFAYTWLYIILSVI. Residues 223-228 are Extracellular-facing; the sequence is SPGVVE. A helical transmembrane segment spans residues 229 to 249; that stretch reads VWEGLLTFFFFPICVVFAWVA. Topologically, residues 250–797 are cytoplasmic; it reads DRRLLFYKYV…FVPPTEYWNG (548 aa). A putative calmodulin-binding region region spans residues 251–270; that stretch reads RRLLFYKYVYKRYRAGKQRG. Ser282 and Ser389 each carry phosphoserine. Calx-beta domains are found at residues 393 to 493 and 524 to 624; these read VNTE…VHLS and ATVT…LEIG. Glu417, Asp453, Asp478, Asp479, Ile481, Glu483, Glu486, Asp530, Asp531, Asp532, Glu548, Asp584, Asp610, Glu611, Glu612, and Glu715 together coordinate Ca(2+). The helical transmembrane segment at 798 to 818 threads the bilayer; that stretch reads WACFIVSILMIGILTAFIGDL. Residues 819–821 are Extracellular-facing; it reads ASH. A helical membrane pass occupies residues 822–842; that stretch reads FGCTIGLKDSVTAVVFVALGT. The Alpha-2 repeat unit spans residues 839–875; that stretch reads ALGTSVPDTFASKVAATQDQYADASIGNVTGSNAVNV. Topologically, residues 843 to 871 are cytoplasmic; that stretch reads SVPDTFASKVAATQDQYADASIGNVTGSN. A helical membrane pass occupies residues 872 to 892; it reads AVNVFLGIGVAWSIAAIYHAA. Residues 893–903 are Extracellular-facing; it reads NGEQFKVSPGT. A helical transmembrane segment spans residues 904 to 924; the sequence is LAFSVTLFTIFAFINVGVLLY. The Cytoplasmic portion of the chain corresponds to 925–941; sequence RRRPEIGGELGGPRTAK. The chain crosses the membrane as a helical span at residues 942-962; the sequence is LLTSCLFVLLWLLYIFFSSLE. At 963–970 the chain is on the extracellular side; the sequence is AYCHIKGF.

This sequence belongs to the Ca(2+):cation antiporter (CaCA) (TC 2.A.19) family. SLC8 subfamily. As to expression, detected in heart (at protein level). Detected in heart.

It localises to the cell membrane. It catalyses the reaction Ca(2+)(in) + 3 Na(+)(out) = Ca(2+)(out) + 3 Na(+)(in). Activated by micromolar levels of Ca(2+). In terms of biological role, mediates the exchange of one Ca(2+) ion against three to four Na(+) ions across the cell membrane, and thereby contributes to the regulation of cytoplasmic Ca(2+) levels and Ca(2+)-dependent cellular processes. Contributes to Ca(2+) transport during excitation-contraction coupling in muscle. In a first phase, voltage-gated channels mediate the rapid increase of cytoplasmic Ca(2+) levels due to release of Ca(2+) stores from the endoplasmic reticulum. SLC8A1 mediates the export of Ca(2+) from the cell during the next phase, so that cytoplasmic Ca(2+) levels rapidly return to baseline. Required for normal embryonic heart development and the onset of heart contractions. The polypeptide is Sodium/calcium exchanger 1 (SLC8A1) (Felis catus (Cat)).